We begin with the raw amino-acid sequence, 535 residues long: Probable C4-dicarboxylate sensor kinase (535 aa).

At 1–11 (MNKKKLSIRWK) the chain is on the cytoplasmic side. The helical transmembrane segment at 12–32 (ITILSYILVIFSFLIGGIVLI) threads the bilayer. The Extracellular portion of the chain corresponds to 33-172 (GNIQHTEERE…IADILLHLKR (140 aa)). Residues 173-193 (DIAFIVVLTLGFGLAGSFLLA) form a helical membrane-spanning segment. The Cytoplasmic segment spans residues 194 to 535 (RHIKKQMFQL…MKGEEAQHGS (342 aa)). The PAS domain maps to 213 to 276 (EERTATFHSM…PEIVERNKAV (64 aa)). Residues 333-528 (VQNHEHMNKL…SFSIVFPMKG (196 aa)) enclose the Histidine kinase domain. At histidine 336 the chain carries Phosphohistidine; by autocatalysis.

It localises to the cell membrane. It carries out the reaction ATP + protein L-histidine = ADP + protein N-phospho-L-histidine.. Its function is as follows. Member of the two-component regulatory system DctS/DctR. Probably activates DctR by phosphorylation. Essential for expression of dctP. In Bacillus subtilis (strain 168), this protein is Probable C4-dicarboxylate sensor kinase (dctS).